A 563-amino-acid chain; its full sequence is Dihydroxy-acid dehydratase (563 aa).

Asp79 is a Mg(2+) binding site. Cys120 lines the [2Fe-2S] cluster pocket. Mg(2+)-binding residues include Asp121 and Lys122. Residue Lys122 is modified to N6-carboxylysine. Cys193 serves as a coordination point for [2Fe-2S] cluster. A Mg(2+)-binding site is contributed by Glu451. The active-site Proton acceptor is Ser477.

Belongs to the IlvD/Edd family. In terms of assembly, homodimer. [2Fe-2S] cluster serves as cofactor. The cofactor is Mg(2+).

The catalysed reaction is (2R)-2,3-dihydroxy-3-methylbutanoate = 3-methyl-2-oxobutanoate + H2O. The enzyme catalyses (2R,3R)-2,3-dihydroxy-3-methylpentanoate = (S)-3-methyl-2-oxopentanoate + H2O. It participates in amino-acid biosynthesis; L-isoleucine biosynthesis; L-isoleucine from 2-oxobutanoate: step 3/4. Its pathway is amino-acid biosynthesis; L-valine biosynthesis; L-valine from pyruvate: step 3/4. Its function is as follows. Functions in the biosynthesis of branched-chain amino acids. Catalyzes the dehydration of (2R,3R)-2,3-dihydroxy-3-methylpentanoate (2,3-dihydroxy-3-methylvalerate) into 2-oxo-3-methylpentanoate (2-oxo-3-methylvalerate) and of (2R)-2,3-dihydroxy-3-methylbutanoate (2,3-dihydroxyisovalerate) into 2-oxo-3-methylbutanoate (2-oxoisovalerate), the penultimate precursor to L-isoleucine and L-valine, respectively. The sequence is that of Dihydroxy-acid dehydratase from Sulfurovum sp. (strain NBC37-1).